A 215-amino-acid polypeptide reads, in one-letter code: Adenylate kinase (215 aa).

10 to 15 provides a ligand contact to ATP; the sequence is GTGKGT. The interval 30–59 is NMP; it reads STGDMLRESVVLKNKIGMIIKNIIEEGKLV. AMP is bound by residues T31, R36, 57 to 59, 85 to 88, and Q92; these read KLV and GFPR. Residues 122–159 form an LID region; it reads GRRIHIQSGRIYHVKFKPPKIKDKDDLTGQTLITRKDD. Residues R123 and 132-133 each bind ATP; that span reads IY. Residues R156 and R167 each coordinate AMP. L200 contacts ATP.

It belongs to the adenylate kinase family. Monomer.

It is found in the cytoplasm. The catalysed reaction is AMP + ATP = 2 ADP. It functions in the pathway purine metabolism; AMP biosynthesis via salvage pathway; AMP from ADP: step 1/1. Its function is as follows. Catalyzes the reversible transfer of the terminal phosphate group between ATP and AMP. Plays an important role in cellular energy homeostasis and in adenine nucleotide metabolism. This is Adenylate kinase from Buchnera aphidicola subsp. Acyrthosiphon pisum (strain 5A).